The chain runs to 492 residues: High-affinity nickel transport protein (492 aa).

The Cytoplasmic segment spans residues methionine 1 to arginine 24. Residues alanine 25 to isoleucine 45 traverse the membrane as a helical segment. Over cysteine 46–threonine 50 the chain is Extracellular. The helical transmembrane segment at aspartate 51–alanine 71 threads the bilayer. Residues aspartate 72–cysteine 94 are Cytoplasmic-facing. A helical membrane pass occupies residues glycine 95–valine 115. Residues serine 116–alanine 136 are Extracellular-facing. Residues valine 137–isoleucine 157 traverse the membrane as a helical segment. Over lysine 158 to glycine 210 the chain is Cytoplasmic. Residues valine 211 to isoleucine 231 traverse the membrane as a helical segment. The Extracellular segment spans residues alanine 232–aspartate 239. The chain crosses the membrane as a helical span at residues alanine 240–valine 260. Residues aspartate 261–serine 382 are Cytoplasmic-facing. A helical transmembrane segment spans residues isoleucine 383–glycine 403. Residues leucine 404–serine 439 lie on the Extracellular side of the membrane. Asparagine 408 is a glycosylation site (N-linked (GlcNAc...) asparagine). A helical membrane pass occupies residues glycine 440 to alanine 460. Topologically, residues lysine 461 to alanine 492 are cytoplasmic.

It belongs to the NiCoT transporter (TC 2.A.52) family.

Its subcellular location is the cell membrane. Functionally, high-affinity nickel-specific transporter responsible for nickel uptake and required for high levels of activity of urease URE1. Does not transport cobalt. Plays a role in host brain invasion. This chain is High-affinity nickel transport protein, found in Cryptococcus neoformans var. grubii serotype A (strain H99 / ATCC 208821 / CBS 10515 / FGSC 9487) (Filobasidiella neoformans var. grubii).